The following is a 430-amino-acid chain: RNA pseudouridine synthase 2, chloroplastic (430 aa).

The transit peptide at 1 to 43 (MLSISQLPSFSLTTAKSLRYPSSPSSSLSIFFSFFPKVSNFVR) directs the protein to the chloroplast. The S4 RNA-binding domain occupies 82–155 (IRLDSWISSR…IPLDIVYEDK (74 aa)). Residues 195 to 222 (SNSEEDDDSDEETFSDDEEMTTSPSSYA) are disordered. A compositionally biased stretch (acidic residues) spans 196–214 (NSEEDDDSDEETFSDDEEM). Residue Asp-234 is part of the active site.

It belongs to the pseudouridine synthase RluA family.

It localises to the plastid. Its subcellular location is the chloroplast. It carries out the reaction a uridine in RNA = a pseudouridine in RNA. The polypeptide is RNA pseudouridine synthase 2, chloroplastic (Arabidopsis thaliana (Mouse-ear cress)).